The following is a 202-amino-acid chain: NADH-quinone oxidoreductase subunit C (202 aa).

The protein belongs to the complex I 30 kDa subunit family. As to quaternary structure, NDH-1 is composed of 14 different subunits. Subunits NuoB, C, D, E, F, and G constitute the peripheral sector of the complex.

It is found in the cell inner membrane. It carries out the reaction a quinone + NADH + 5 H(+)(in) = a quinol + NAD(+) + 4 H(+)(out). In terms of biological role, NDH-1 shuttles electrons from NADH, via FMN and iron-sulfur (Fe-S) centers, to quinones in the respiratory chain. The immediate electron acceptor for the enzyme in this species is believed to be ubiquinone. Couples the redox reaction to proton translocation (for every two electrons transferred, four hydrogen ions are translocated across the cytoplasmic membrane), and thus conserves the redox energy in a proton gradient. The sequence is that of NADH-quinone oxidoreductase subunit C from Albidiferax ferrireducens (strain ATCC BAA-621 / DSM 15236 / T118) (Rhodoferax ferrireducens).